A 166-amino-acid chain; its full sequence is Vasopressin-neurophysin 2-copeptin (166 aa).

Positions 1-19 (MPDATLPACFLGLLALTSA) are cleaved as a signal peptide. Cys-20 and Cys-25 are joined by a disulfide. Gly-28 is modified (glycine amide). Intrachain disulfides connect Cys-41–Cys-85, Cys-44–Cys-58, Cys-52–Cys-75, Cys-59–Cys-65, Cys-92–Cys-104, Cys-98–Cys-116, and Cys-105–Cys-110. Residue Asn-133 is glycosylated (N-linked (GlcNAc...) asparagine).

The protein belongs to the vasopressin/oxytocin family. As to quaternary structure, interacts with vasopressin receptors V1bR/AVPR1B (Ki=85 pM), V1aR/AVPR1A (Ki=0.6 nM) and V2R/AVPR2 (Ki=4.9 nM). Interacts with oxytocin receptor (OXTR) (Ki=110 nM). In terms of processing, a shorter neurophysin molecule (32-123) is called neurophysin-I and is derived from the complete protein (called neurophysin III) by proteolytic degradation (in vivo or after extraction).

The protein localises to the secreted. Its function is as follows. Neurophysin 2 specifically binds vasopressin. In terms of biological role, vasopressin has a direct antidiuretic action on the kidney, it also causes vasoconstriction of the peripheral vessels. Acts by binding to vasopressin receptors (V1bR/AVPR1B, V1aR/AVPR1A, and V2R/AVPR2). This is Vasopressin-neurophysin 2-copeptin (AVP) from Sus scrofa (Pig).